Here is a 234-residue protein sequence, read N- to C-terminus: UPF0173 metal-dependent hydrolase RL2074 (234 aa).

It belongs to the UPF0173 family.

In Rhizobium johnstonii (strain DSM 114642 / LMG 32736 / 3841) (Rhizobium leguminosarum bv. viciae), this protein is UPF0173 metal-dependent hydrolase RL2074.